Consider the following 370-residue polypeptide: F-box protein At1g66490 (370 aa).

An F-box domain is found at 1–46; sequence MRTISDLPVALVEEILSRVPLTSLSAVRSTCKTWNALSKTQIFGKT.

In Arabidopsis thaliana (Mouse-ear cress), this protein is F-box protein At1g66490.